The chain runs to 71 residues: Defensin 1 (71 aa).

The first 25 residues, 1–25 (KTVAGFCIFFLVLFLAQEGVVKTEA), serve as a signal peptide directing secretion. 3 disulfide bridges follow: cysteine 28-cysteine 71, cysteine 39-cysteine 60, and cysteine 45-cysteine 65.

Belongs to the DEFL family. As to quaternary structure, may form dimers. In terms of processing, not glycosylated. Post-translationally, contains 4 disulfide bonds. Met-61 and Met-63 might be oxidized in some molecules.

Probably has antifungal activity. This Arachis hypogaea (Peanut) protein is Defensin 1.